We begin with the raw amino-acid sequence, 211 residues long: Thymidylate kinase (211 aa).

Residue 11–18 (GPDGAGKT) coordinates ATP.

It belongs to the thymidylate kinase family.

It catalyses the reaction dTMP + ATP = dTDP + ADP. In terms of biological role, phosphorylation of dTMP to form dTDP in both de novo and salvage pathways of dTTP synthesis. This chain is Thymidylate kinase, found in Streptococcus pyogenes serotype M3 (strain ATCC BAA-595 / MGAS315).